Reading from the N-terminus, the 135-residue chain is Large ribosomal subunit protein uL16m (135 aa).

The protein belongs to the universal ribosomal protein uL16 family.

Its subcellular location is the mitochondrion. The chain is Large ribosomal subunit protein uL16m (RPL16) from Prototheca wickerhamii.